Reading from the N-terminus, the 31-residue chain is Antifungal protein 1 (31 aa).

Basic and acidic residues-rich tracts occupy residues 1–10 (PGAGSQEERM) and 18–31 (DFSHEERFLSMVRE). Residues 1-31 (PGAGSQEERMQGQMEGQDFSHEERFLSMVRE) form a disordered region.

As to quaternary structure, heterodimer; disulfide-linked. Post-translationally, disulfide bonds.

In terms of biological role, has antifungal activity against C.gloeosporioides but not against B.cinerea and Fusarium sp. or against various yeasts. Has no antibacterial activity. The polypeptide is Antifungal protein 1 (Passiflora alata (Winged-stem passion flower)).